The primary structure comprises 226 residues: X-linked lymphocyte-regulated protein 3A (226 aa).

A compositionally biased stretch (basic and acidic residues) spans 1–18; the sequence is MSSRERKATDTAGRHSRM. The interval 1-72 is disordered; that stretch reads MSSRERKATD…QDLVQEFEEP (72 aa). Residues 21-30 are compositionally biased toward polar residues; it reads NLSSDDSQNP. 2 stretches are compositionally biased toward basic and acidic residues: residues 39–48 and 56–65; these read EVLDAGREDI and QQARKEKQDL. The stretch at 155–210 forms a coiled coil; it reads ETLTLQKNRMEEFKSLCEKYLEKLEVLRDSRGNSIAEELRRLIATLEIKLLMLHNQ.

The protein belongs to the XLR/SYCP3 family. Expressed in lymphoid cells.

The chain is X-linked lymphocyte-regulated protein 3A (Xlr3a) from Mus musculus (Mouse).